The following is a 183-amino-acid chain: Ribosome-recycling factor (183 aa).

This sequence belongs to the RRF family.

The protein resides in the cytoplasm. Functionally, responsible for the release of ribosomes from messenger RNA at the termination of protein biosynthesis. May increase the efficiency of translation by recycling ribosomes from one round of translation to another. In Ureaplasma parvum serovar 3 (strain ATCC 27815 / 27 / NCTC 11736), this protein is Ribosome-recycling factor.